A 901-amino-acid polypeptide reads, in one-letter code: Protein translocase subunit SecA (901 aa).

ATP is bound by residues Gln87, 105–109 (GEGKT), and Asp512. A disordered region spans residues 859–901 (HQDDDSAAAAALAAQTGERKVGRNDPCPCGSGKKYKQCHGRLQ). Zn(2+) contacts are provided by Cys885, Cys887, Cys896, and His897. Residues 891–901 (KKYKQCHGRLQ) show a composition bias toward basic residues.

Belongs to the SecA family. In terms of assembly, monomer and homodimer. Part of the essential Sec protein translocation apparatus which comprises SecA, SecYEG and auxiliary proteins SecDF-YajC and YidC. The cofactor is Zn(2+).

The protein resides in the cell inner membrane. The protein localises to the cytoplasm. It catalyses the reaction ATP + H2O + cellular proteinSide 1 = ADP + phosphate + cellular proteinSide 2.. Part of the Sec protein translocase complex. Interacts with the SecYEG preprotein conducting channel. Has a central role in coupling the hydrolysis of ATP to the transfer of proteins into and across the cell membrane, serving both as a receptor for the preprotein-SecB complex and as an ATP-driven molecular motor driving the stepwise translocation of polypeptide chains across the membrane. This Escherichia coli O6:K15:H31 (strain 536 / UPEC) protein is Protein translocase subunit SecA.